The sequence spans 263 residues: UPF0739 protein C1orf74 homolog (263 aa).

Belongs to the UPF0739 family.

The protein is UPF0739 protein C1orf74 homolog of Rattus norvegicus (Rat).